Reading from the N-terminus, the 427-residue chain is Peptidase B (427 aa).

The Mn(2+) site is built by Lys-195 and Asp-200. Residue Lys-207 is part of the active site. Residues Asp-218, Asp-277, and Glu-279 each contribute to the Mn(2+) site. Residue Arg-281 is part of the active site.

It belongs to the peptidase M17 family. Homohexamer. The cofactor is Mn(2+).

The protein localises to the cytoplasm. The catalysed reaction is Release of an N-terminal amino acid, Xaa, from a peptide or arylamide. Xaa is preferably Glu or Asp but may be other amino acids, including Leu, Met, His, Cys and Gln.. Functionally, probably plays an important role in intracellular peptide degradation. The polypeptide is Peptidase B (Escherichia coli (strain ATCC 8739 / DSM 1576 / NBRC 3972 / NCIMB 8545 / WDCM 00012 / Crooks)).